Reading from the N-terminus, the 557-residue chain is Hepatocyte nuclear factor 1-beta (557 aa).

Residues 1-31 form a dimerization region; that stretch reads MVSKLTSLQQELLSALLSSGVTKEVLVQALE. In terms of domain architecture, HNF-p1 spans 1–32; that stretch reads MVSKLTSLQQELLSALLSSGVTKEVLVQALEE. A phosphoserine mark is found at S49, S52, S75, and S80. The disordered stretch occupies residues 64–85; it reads TLTNGHAKGRLSGDEGSEDGDD. Residues 93–188 form the POU-specific atypical domain; the sequence is KELQALNTEE…ILRQFNQTVQ (96 aa). The segment at residues 231-311 is a DNA-binding region (homeobox; HNF1-type); it reads MRRNRFKWGP…NRRKEEAFRQ (81 aa). The disordered stretch occupies residues 324–370; the sequence is HSLNPLLSHGSPHHQPSSSPPNKLSGVRYSQQGNNEVTSSSTISHHG. The segment covering 328–344 has biased composition (low complexity); it reads PLLSHGSPHHQPSSSPP. The span at 351-370 shows a compositional bias: polar residues; sequence RYSQQGNNEVTSSSTISHHG.

Belongs to the HNF1 homeobox family. In terms of assembly, binds DNA as a dimer. Can form homodimer or heterodimer with HNF1-alpha. Interacts (via HNF-p1 domain) with PCBD1; the interaction increases its transactivation activity.

The protein resides in the nucleus. Transcription factor that binds to the inverted palindrome 5'-GTTAATNATTAAC-3'. Binds to the FPC element in the cAMP regulatory unit of the PLAU gene. Transcriptional activity is increased by coactivator PCBD1. This chain is Hepatocyte nuclear factor 1-beta (HNF1B), found in Pongo abelii (Sumatran orangutan).